Consider the following 138-residue polypeptide: Envelope glycoprotein N (138 aa).

The signal sequence occupies residues 1–21 (MEWNTLVLGLLVLSVVAESSG). The Virion surface portion of the chain corresponds to 22–101 (NNSSTSTSAT…SHMYELSLSS (80 aa)). The helical transmembrane segment at 102–122 (FAAWWTMLNALILMGAFCIVL) threads the bilayer. At 123-138 (RHCCFQNFTATTTKGY) the chain is on the intravirion side.

This sequence belongs to the herpesviridae glycoprotein N family. Interacts (via N-terminus) with gM (via N-terminus). The gM-gN heterodimer forms the gCII complex. O-glycosylated.

The protein localises to the virion membrane. It localises to the host membrane. It is found in the host Golgi apparatus. The protein resides in the host trans-Golgi network. In terms of biological role, envelope glycoprotein necessary for proper maturation of gM and modulation of its membrane fusion activity. Also plays a critical role in virion morphogenesis. This Human cytomegalovirus (strain AD169) (HHV-5) protein is Envelope glycoprotein N.